The chain runs to 375 residues: F420-dependent formate dehydrogenase 2 subunit beta (375 aa).

4Fe-4S ferredoxin-type domains are found at residues 268-291 (PEPEKWDEYWSRCIKCYGCRDVCP) and 320-349 (IRLSHMSFSCINCGQCEDVCPVEIPLAKIY). [4Fe-4S] cluster is bound by residues cysteine 280, cysteine 283, cysteine 286, cysteine 290, cysteine 329, cysteine 332, cysteine 335, and cysteine 339.

Belongs to the FrhB family. Dimer of an alpha (FdhA2) and a beta (FdhB2) subunit. [4Fe-4S] cluster is required as a cofactor. It depends on FAD as a cofactor. Requires Zn(2+) as cofactor.

The enzyme catalyses oxidized coenzyme F420-(gamma-L-Glu)(n) + formate + 2 H(+) = reduced coenzyme F420-(gamma-L-Glu)(n) + CO2. Functionally, catalyzes the oxidation of formate to carbon dioxide, with coenzyme F420 as the electron acceptor. In vitro can also use methyl viologen as electron acceptor. In Methanococcus maripaludis (strain DSM 14266 / JCM 13030 / NBRC 101832 / S2 / LL), this protein is F420-dependent formate dehydrogenase 2 subunit beta.